The sequence spans 488 residues: MESRSKVKTYGKNRRYINKDIEIWASLDERPCALKPRNIENFNNQERSDLEHIHSKPKKDSLLSWNILLKKGSYKENELLAKRNQNLVPTVIIPASPRDNASKSVVSKKEVVNLSSSVALSGKPANNSKLDPLHRLLQIVAQEDALPFSQFVKSQTFEIQKIGEASYSEVYQASNADDVPVVWKVIPFGEDGQAQYADVLNEVQISQWIKVDGFANLHQVVVVKGTYPSLLLEEWDRYLMQNGSENDRPDSYSSTQLYCVLCLDHSGTDLEHFELRSWRECWSVFYETLKILSLVETRYEFEHRDLHWGNILIRKADRSEEEVSFLLNEISLDDIESVDFPGSQDKADDFDNILQVTLIDFTLARASYSQGIISYNEFNDPDLFNGVDDYQFDIYRLMSRVTKGRWAQFFPITNVLWLHYLIHQLLHKKNLSSPLTETETLMRSRLKQIFRLIDPVKTMQFQQAEDSIRSKSTVTSATSLLNWVRQKY.

The 333-residue stretch at 156 to 488 (TFEIQKIGEA…SLLNWVRQKY (333 aa)) folds into the Protein kinase domain. Residues 162 to 170 (IGEASYSEV) and lysine 184 each bind ATP. Aspartate 305 serves as the catalytic Proton acceptor.

The protein belongs to the protein kinase superfamily. Ser/Thr protein kinase family. Haspin subfamily. In terms of assembly, interacts with pds5 and swi6.

It is found in the cytoplasm. The protein localises to the chromosome. It carries out the reaction L-seryl-[protein] + ATP = O-phospho-L-seryl-[protein] + ADP + H(+). The catalysed reaction is L-threonyl-[protein] + ATP = O-phospho-L-threonyl-[protein] + ADP + H(+). Functionally, serine/threonine haspin-like protein kinase involved in cell cycle regulation. Acts in chromosomal passenger complex (CPC) targeting to centromeres by phosphorylating histone H3 at 'Thr3' (H3T3ph). This Schizosaccharomyces pombe (strain 972 / ATCC 24843) (Fission yeast) protein is Serine/threonine-protein kinase haspin homolog hrk1 (hrk1).